We begin with the raw amino-acid sequence, 156 residues long: Cell division protein SepF (156 aa).

The segment covering 23–36 (SYEKEQTDMKKQQD) has biased composition (basic and acidic residues). The segment at 23–50 (SYEKEQTDMKKQQDPPEQQDVTFPKAQP) is disordered.

Belongs to the SepF family. In terms of assembly, homodimer. Interacts with FtsZ.

Its subcellular location is the cytoplasm. In terms of biological role, cell division protein that is part of the divisome complex and is recruited early to the Z-ring. Probably stimulates Z-ring formation, perhaps through the cross-linking of FtsZ protofilaments. Its function overlaps with FtsA. The sequence is that of Cell division protein SepF from Bacillus thuringiensis (strain Al Hakam).